The following is a 181-amino-acid chain: Peptidyl-tRNA hydrolase (181 aa).

Residue tyrosine 14 participates in tRNA binding. The active-site Proton acceptor is histidine 19. Positions 60, 62, and 108 each coordinate tRNA.

This sequence belongs to the PTH family. In terms of assembly, monomer.

The protein resides in the cytoplasm. It carries out the reaction an N-acyl-L-alpha-aminoacyl-tRNA + H2O = an N-acyl-L-amino acid + a tRNA + H(+). Its function is as follows. Hydrolyzes ribosome-free peptidyl-tRNAs (with 1 or more amino acids incorporated), which drop off the ribosome during protein synthesis, or as a result of ribosome stalling. In terms of biological role, catalyzes the release of premature peptidyl moieties from peptidyl-tRNA molecules trapped in stalled 50S ribosomal subunits, and thus maintains levels of free tRNAs and 50S ribosomes. This is Peptidyl-tRNA hydrolase from Metamycoplasma arthritidis (strain 158L3-1) (Mycoplasma arthritidis).